A 1663-amino-acid polypeptide reads, in one-letter code: Cortactin-binding protein 2 (1663 aa).

Disordered regions lie at residues 1–23, 203–222, 367–440, 454–478, and 498–616; these read MATD…AGAA, KKKT…RSTE, GASV…LHPG, GNAN…SPTS, and RFTS…PKPS. A coiled-coil region spans residues 119 to 276; it reads KKMQERMSAQ…EQLKRGSDSK (158 aa). Positions 386–396 are enriched in low complexity; it reads PSTGSTPDPTS. Position 498 is an asymmetric dimethylarginine (arginine 498). The span at 583 to 593 shows a compositional bias: polar residues; sequence TVASTPSSLPQ. ANK repeat units lie at residues 709-739, 743-772, 776-805, 809-838, 842-871, and 912-942; these read GRPT…DINY, DGHS…QVNA, NGFT…NINH, GGQT…NRSV, DGWT…PAHG, and EGWT…EPER. The segment at 1449 to 1482 is disordered; it reads KGESGAWRKVNTSPRRKSGRFSLPTWNKPDLSTE. Residue serine 1524 is modified to Phosphoserine. Residues 1581–1663 form a disordered region; that stretch reads QKEVSPLSSH…KNEHLEKPNK (83 aa). A compositionally biased stretch (polar residues) spans 1582-1599; that stretch reads KEVSPLSSHQTTECSNSK. Low complexity predominate over residues 1624–1638; that stretch reads SQNTKRSSSSSNTRQ. The segment covering 1639-1648 has biased composition (polar residues); the sequence is IEINNNSKEV. Residues 1653-1663 are compositionally biased toward basic and acidic residues; that stretch reads HKNEHLEKPNK.

As to quaternary structure, interacts with CTTN/cortactin SH3 domain. Interacts with STRN, STRN4/zinedin and MOB4/phocein; this interactions mediate the association with the STRIPAK core complex and may regulate dendritic spine distribution of the STRIPAK complex in hippocampal neurons. Activation of glutamate receptors weakens the interaction with STRN and STRN4. As to expression, highest expression in brain. Also expressed in kidney, pancreas, lung, heart, liver, skeletal muscle and placenta.

It is found in the cytoplasm. The protein resides in the cell cortex. Its subcellular location is the cell projection. The protein localises to the dendritic spine. In terms of biological role, regulates the dendritic spine distribution of CTTN/cortactin in hippocampal neurons, and thus controls dendritic spinogenesis and dendritic spine maintenance. Associates with the striatin-interacting phosphatase and kinase (STRIPAK) core complex to regulate dendritic spine distribution of the STRIPAK complex in hippocampal neurons. The protein is Cortactin-binding protein 2 of Homo sapiens (Human).